The following is a 510-amino-acid chain: tRNA-2-methylthio-N(6)-dimethylallyladenosine synthase (510 aa).

Residues 19–135 enclose the MTTase N-terminal domain; it reads RTFEVRTYGC…LPALLDRARH (117 aa). [4Fe-4S] cluster contacts are provided by cysteine 28, cysteine 64, cysteine 98, cysteine 172, cysteine 176, and cysteine 179. Residues 158-394 enclose the Radical SAM core domain; the sequence is RESSYAAWVS…IELQERISLE (237 aa). Residues 397 to 467 form the TRAM domain; it reads TAQIGRRVEL…PHHLIADAGL (71 aa). The disordered stretch occupies residues 477–510; that stretch reads DAHAAGQKPRTGVGLGMPAVGAPDPLPATTGCAR.

It belongs to the methylthiotransferase family. MiaB subfamily. In terms of assembly, monomer. Requires [4Fe-4S] cluster as cofactor.

Its subcellular location is the cytoplasm. The catalysed reaction is N(6)-dimethylallyladenosine(37) in tRNA + (sulfur carrier)-SH + AH2 + 2 S-adenosyl-L-methionine = 2-methylsulfanyl-N(6)-dimethylallyladenosine(37) in tRNA + (sulfur carrier)-H + 5'-deoxyadenosine + L-methionine + A + S-adenosyl-L-homocysteine + 2 H(+). Functionally, catalyzes the methylthiolation of N6-(dimethylallyl)adenosine (i(6)A), leading to the formation of 2-methylthio-N6-(dimethylallyl)adenosine (ms(2)i(6)A) at position 37 in tRNAs that read codons beginning with uridine. In Mycolicibacterium vanbaalenii (strain DSM 7251 / JCM 13017 / BCRC 16820 / KCTC 9966 / NRRL B-24157 / PYR-1) (Mycobacterium vanbaalenii), this protein is tRNA-2-methylthio-N(6)-dimethylallyladenosine synthase.